A 306-amino-acid chain; its full sequence is Ornithine carbamoyltransferase (306 aa).

Residues 51–54 (STRT), Gln-78, Arg-102, and 129–132 (HPCQ) contribute to the carbamoyl phosphate site. Residues Asn-160, Asp-223, and 227 to 228 (SM) each bind L-ornithine. Carbamoyl phosphate-binding positions include 263 to 264 (CL) and Arg-291.

It belongs to the aspartate/ornithine carbamoyltransferase superfamily. OTCase family.

The protein localises to the cytoplasm. It catalyses the reaction carbamoyl phosphate + L-ornithine = L-citrulline + phosphate + H(+). It functions in the pathway amino-acid biosynthesis; L-arginine biosynthesis; L-arginine from L-ornithine and carbamoyl phosphate: step 1/3. In terms of biological role, reversibly catalyzes the transfer of the carbamoyl group from carbamoyl phosphate (CP) to the N(epsilon) atom of ornithine (ORN) to produce L-citrulline. The polypeptide is Ornithine carbamoyltransferase (argF) (Nostoc punctiforme (strain ATCC 29133 / PCC 73102)).